The following is a 169-amino-acid chain: Shikimate kinase (169 aa).

An ATP-binding site is contributed by 13-18 (GAGKST). Residue S17 coordinates Mg(2+). Substrate-binding residues include D35, R59, and G80. Position 117 (R117) interacts with ATP. A substrate-binding site is contributed by R136. Residue R153 coordinates ATP.

It belongs to the shikimate kinase family. As to quaternary structure, monomer. Requires Mg(2+) as cofactor.

It localises to the cytoplasm. The catalysed reaction is shikimate + ATP = 3-phosphoshikimate + ADP + H(+). Its pathway is metabolic intermediate biosynthesis; chorismate biosynthesis; chorismate from D-erythrose 4-phosphate and phosphoenolpyruvate: step 5/7. In terms of biological role, catalyzes the specific phosphorylation of the 3-hydroxyl group of shikimic acid using ATP as a cosubstrate. This chain is Shikimate kinase, found in Corynebacterium efficiens (strain DSM 44549 / YS-314 / AJ 12310 / JCM 11189 / NBRC 100395).